Reading from the N-terminus, the 181-residue chain is dTDP-4-dehydrorhamnose 3,5-epimerase (181 aa).

Substrate contacts are provided by residues arginine 23, glutamate 28, 47-49 (QDN), and arginine 59. The Proton acceptor role is filled by histidine 62. Positions 71 and 118 each coordinate substrate. Residue tyrosine 131 is the Proton donor of the active site. 2 residues coordinate substrate: glutamate 142 and lysine 167.

It belongs to the dTDP-4-dehydrorhamnose 3,5-epimerase family. As to quaternary structure, homodimer.

It carries out the reaction dTDP-4-dehydro-6-deoxy-alpha-D-glucose = dTDP-4-dehydro-beta-L-rhamnose. The protein operates within carbohydrate biosynthesis; dTDP-L-rhamnose biosynthesis. It participates in bacterial outer membrane biogenesis; lipopolysaccharide biosynthesis. Functionally, catalyzes the epimerization of the C3' and C5'positions of dTDP-6-deoxy-D-xylo-4-hexulose, forming dTDP-6-deoxy-L-lyxo-4-hexulose. The polypeptide is dTDP-4-dehydrorhamnose 3,5-epimerase (rmlC) (Pseudomonas aeruginosa (strain ATCC 15692 / DSM 22644 / CIP 104116 / JCM 14847 / LMG 12228 / 1C / PRS 101 / PAO1)).